We begin with the raw amino-acid sequence, 283 residues long: Bifunctional protein FolD (283 aa).

NADP(+)-binding positions include 165–167 (GAS), Ser190, and Ile231.

Belongs to the tetrahydrofolate dehydrogenase/cyclohydrolase family. As to quaternary structure, homodimer.

It catalyses the reaction (6R)-5,10-methylene-5,6,7,8-tetrahydrofolate + NADP(+) = (6R)-5,10-methenyltetrahydrofolate + NADPH. The catalysed reaction is (6R)-5,10-methenyltetrahydrofolate + H2O = (6R)-10-formyltetrahydrofolate + H(+). It participates in one-carbon metabolism; tetrahydrofolate interconversion. Its function is as follows. Catalyzes the oxidation of 5,10-methylenetetrahydrofolate to 5,10-methenyltetrahydrofolate and then the hydrolysis of 5,10-methenyltetrahydrofolate to 10-formyltetrahydrofolate. This chain is Bifunctional protein FolD, found in Bordetella bronchiseptica (strain ATCC BAA-588 / NCTC 13252 / RB50) (Alcaligenes bronchisepticus).